The chain runs to 170 residues: Lipoprotein signal peptidase (170 aa).

Transmembrane regions (helical) follow at residues 13–33 (IFISILVFFDQWSKYLVVTYV), 72–92 (LFFLIIPIIILVFVFSFSLKE), 96–113 (VSRFALILILSGGIGNII), 116–136 (LFRPLGVVDFLDVKFFGIFGL), and 142–162 (FNFADSYVVVGMIVFIIYDLF). Active-site residues include Asp-124 and Asp-146.

It belongs to the peptidase A8 family.

It is found in the cell inner membrane. The enzyme catalyses Release of signal peptides from bacterial membrane prolipoproteins. Hydrolyzes -Xaa-Yaa-Zaa-|-(S,diacylglyceryl)Cys-, in which Xaa is hydrophobic (preferably Leu), and Yaa (Ala or Ser) and Zaa (Gly or Ala) have small, neutral side chains.. Its pathway is protein modification; lipoprotein biosynthesis (signal peptide cleavage). Its function is as follows. This protein specifically catalyzes the removal of signal peptides from prolipoproteins. The sequence is that of Lipoprotein signal peptidase from Borrelia duttonii (strain Ly).